Reading from the N-terminus, the 569-residue chain is Oxygen-dependent choline dehydrogenase (569 aa).

Residue 9–38 (DYVIIGGGSAGSVLGNRLSEDKDKEVLVLE) participates in FAD binding. The active-site Proton acceptor is H475.

It belongs to the GMC oxidoreductase family. FAD is required as a cofactor.

The catalysed reaction is choline + A = betaine aldehyde + AH2. It catalyses the reaction betaine aldehyde + NAD(+) + H2O = glycine betaine + NADH + 2 H(+). The protein operates within amine and polyamine biosynthesis; betaine biosynthesis via choline pathway; betaine aldehyde from choline (cytochrome c reductase route): step 1/1. Its function is as follows. Involved in the biosynthesis of the osmoprotectant glycine betaine. Catalyzes the oxidation of choline to betaine aldehyde and betaine aldehyde to glycine betaine at the same rate. The chain is Oxygen-dependent choline dehydrogenase from Staphylococcus aureus (strain COL).